Consider the following 188-residue polypeptide: Protein TIFY 9 (188 aa).

The tract at residues 20–41 is disordered; the sequence is DADDRHAKSGGSSASSSSSIRG. The span at 28–38 shows a compositional bias: low complexity; that stretch reads SGGSSASSSSS. In terms of domain architecture, Tify spans 80 to 114; sequence AAAAAAPMTLFYNGSVAVFDVSHDKAEAIMRMATE. The Jas motif lies at 135–160; the sequence is PLTRTKSLQRFLSKRKERLTSLGPYQ. Residues 156 to 188 are disordered; sequence LGPYQVGGPAAVGATTSTTTKSFLAKEEEHTAS. Residues 179–188 are compositionally biased toward basic and acidic residues; the sequence is LAKEEEHTAS.

Belongs to the TIFY/JAZ family. In terms of processing, ubiquitinated. Targeted for degradation by the SCF(COI1) E3 ubiquitin ligase-proteasome pathway during jasmonate signaling.

Its function is as follows. Repressor of jasmonate responses. This is Protein TIFY 9 from Oryza sativa subsp. indica (Rice).